The chain runs to 418 residues: Trans-acting enoyl reductase (418 aa).

Belongs to the saccharopine dehydrogenase family. Enoyl reductase subfamily.

Its function is as follows. Involved in the reduction of the double bond between C-4 and C-5 during phthiocerol dimycocerosates (DIM A) and glycosylated phenolphthiocerol dimycocerosates (PGL) biosynthesis. This Mycobacterium ulcerans (strain Agy99) protein is Trans-acting enoyl reductase.